The sequence spans 200 residues: GTP-binding protein rho5 (200 aa).

13-20 (GDGACGKT) is a GTP binding site. An Effector region motif is present at residues 35–43 (YVPTVFENY). GTP-binding positions include 60-64 (DTAGQ) and 118-121 (CKVD). Cysteine 197 carries the cysteine methyl ester modification. Cysteine 197 carries S-geranylgeranyl cysteine lipidation. A propeptide spans 198–200 (ILL) (removed in mature form).

It belongs to the small GTPase superfamily. Rho family.

The protein localises to the cell membrane. The protein is GTP-binding protein rho5 (rho5) of Schizosaccharomyces pombe (strain 972 / ATCC 24843) (Fission yeast).